Reading from the N-terminus, the 417-residue chain is Peptidyl-Asp metalloendopeptidase (417 aa).

The N-terminal stretch at 1–25 (MLSRSIGKAAGGLVLGLSVAAAAHA) is a signal peptide. H327 contacts Zn(2+). E328 is a catalytic residue. Residues H331 and H337 each coordinate Zn(2+).

The protein belongs to the peptidase M72 family. Zn(2+) is required as a cofactor.

It catalyses the reaction Cleavage of Xaa-|-Asp, Xaa-|-Glu and Xaa-|-cysteic acid bonds.. Its function is as follows. Metalloprotease, specifically cleaves on the N-terminal side of aspartyl, glutamyl and cysteic acid residues. This chain is Peptidyl-Asp metalloendopeptidase, found in Stenotrophomonas maltophilia (strain K279a).